Reading from the N-terminus, the 209-residue chain is MKIFNKDGNKNSKEDTKAGAENSEAQNSGSSAEEVNKARENPEEASASSEAEKSPEVKCQEEKQVLMEKYYRLAADFDNFKKRTARQMEENRKAVLEQVLLDFVEVTDNFDRALKSAKTAEDMSSIVSGIEQLSRQFFSILEKYGLEKIESEKASEFDPHRHEAVHHIETSEVPDNTIVDVYKTGYALNSKVIRPAMVSVARNPDEAEK.

Residues 1 to 18 show a composition bias toward basic and acidic residues; that stretch reads MKIFNKDGNKNSKEDTKA. The interval 1-60 is disordered; that stretch reads MKIFNKDGNKNSKEDTKAGAENSEAQNSGSSAEEVNKARENPEEASASSEAEKSPEVKCQ. Polar residues predominate over residues 23–33; the sequence is SEAQNSGSSAE. The segment covering 50 to 60 has biased composition (basic and acidic residues); it reads EAEKSPEVKCQ.

This sequence belongs to the GrpE family. Homodimer.

It is found in the cytoplasm. Its function is as follows. Participates actively in the response to hyperosmotic and heat shock by preventing the aggregation of stress-denatured proteins, in association with DnaK and GrpE. It is the nucleotide exchange factor for DnaK and may function as a thermosensor. Unfolded proteins bind initially to DnaJ; upon interaction with the DnaJ-bound protein, DnaK hydrolyzes its bound ATP, resulting in the formation of a stable complex. GrpE releases ADP from DnaK; ATP binding to DnaK triggers the release of the substrate protein, thus completing the reaction cycle. Several rounds of ATP-dependent interactions between DnaJ, DnaK and GrpE are required for fully efficient folding. This is Protein GrpE from Methanosarcina barkeri (strain Fusaro / DSM 804).